The primary structure comprises 354 residues: Falstatin (354 aa).

A signal peptide spans 1–21; the sequence is MKSITFFVFNICSILALLSHC. The BC loop; binds and inhibits the active site cavity of cysteine proteases signature appears at 226 to 236; sequence LEGNAGTGYLW. Residues 274-317 form a disordered region; sequence KYKIDEHDSSKNVNREIESPEQKESDSKPKKPQMQLLGGPDRMR. The span at 275–302 shows a compositional bias: basic and acidic residues; the sequence is YKIDEHDSSKNVNREIESPEQKESDSKP.

Belongs to the protease inhibitor I71 family. As to quaternary structure, oligomer; probably composed of 10 monomers. In terms of processing, during the liver stage, proteolytically cleaved.

It is found in the secreted. The protein resides in the cytoplasmic vesicle. Its subcellular location is the secretory vesicle. The protein localises to the microneme. It localises to the host cytoplasm. It is found in the parasitophorous vacuole lumen. Its function is as follows. Cysteine protease inhibitor. Required for the invasion of host erythrocytes by merozoites. In the mosquito vector, essential for the gliding motility of hemocoel sporozoites and, therefore, for salivary gland invasion and the subsequent transmission from the mosquito to the mammalian host. Required for the invasion of host hepatocytes. During the liver stage, may prevent host hepatocyte cell death likely by inhibiting host cysteine proteases. The protein is Falstatin of Plasmodium berghei (strain Anka).